A 224-amino-acid polypeptide reads, in one-letter code: Uracil-DNA glycosylase 2 (224 aa).

The active-site Proton acceptor is the Asp-64.

It belongs to the uracil-DNA glycosylase (UDG) superfamily. UNG family.

Its subcellular location is the cytoplasm. It catalyses the reaction Hydrolyzes single-stranded DNA or mismatched double-stranded DNA and polynucleotides, releasing free uracil.. Excises uracil residues from the DNA which can arise as a result of misincorporation of dUMP residues by DNA polymerase or due to deamination of cytosine. The protein is Uracil-DNA glycosylase 2 of Listeria monocytogenes serovar 1/2a (strain ATCC BAA-679 / EGD-e).